A 662-amino-acid chain; its full sequence is Methyl-accepting chemotaxis protein TlpB (662 aa).

Over 1-16 the chain is Cytoplasmic; the sequence is MGKFIQWIKQPSISKP. The chain crosses the membrane as a helical span at residues 17 to 37; the sequence is LIAAFLAVLILPVGVLAYFSY. The Extracellular portion of the chain corresponds to 38–281; that stretch reads QSAWNALDRE…LQDASSPVLN (244 aa). The 76-residue stretch at 153 to 228 folds into the Cache domain; the sequence is SEPYTDEATG…KPGTTGSGDW (76 aa). Residues 282–302 form a helical membrane-spanning segment; it reads TAVIILCVSIVIGGILILYII. Residues 303–355 form the HAMP domain; it reads RAITKPLRKLVSTSAKISSGDLTEVIDIHSKNEFGQLGESFNEMSASLRSVIG. The Cytoplasmic portion of the chain corresponds to 303–662; sequence RAITKPLRKL…DITKKFKIES (360 aa). Residue Glu-370 is modified to Glutamate methyl ester (Glu). In terms of domain architecture, Methyl-accepting transducer spans 374 to 610; that stretch reads SAAQTSKATE…EVSSAVEDIS (237 aa). Position 594 is a glutamate methyl ester (Gln) (Gln-594). 2 positions are modified to glutamate methyl ester (Glu): Glu-629 and Glu-636.

Belongs to the methyl-accepting chemotaxis (MCP) protein family.

It is found in the cell membrane. In terms of biological role, chemotactic-signal transducers respond to changes in the concentration of attractants and repellents in the environment, transduce a signal from the outside to the inside of the cell, and facilitate sensory adaptation through the variation of the level of methylation. All amino acids serve as attractants in B.subtilis, they appear to cause an increase in the turnover methyl groups, leading to methylation of an unidentified acceptor, while repellents have been shown to cause a decrease in methyl group turnover. The methyl groups are added by a methyltransferase and removed by a methylesterase. The polypeptide is Methyl-accepting chemotaxis protein TlpB (tlpB) (Bacillus subtilis (strain 168)).